Consider the following 615-residue polypeptide: Probable transporter mch1 (615 aa).

Positions 1 to 35 are disordered; sequence MTGSIGQAPAIDKRDFDINRRSSTPHETAAQEDEA. The segment covering 11 to 20 has biased composition (basic and acidic residues); sequence IDKRDFDINR. Residues 84-104 form a helical membrane-spanning segment; that stretch reads FVWGVITCLGAGSITAFSLYG. An N-linked (GlcNAc...) asparagine glycan is attached at asparagine 112. 5 helical membrane-spanning segments follow: residues 120-140, 147-167, 182-202, 218-238, and 261-281; these read EVSI…GYLC, PLTL…AFVY, FWVM…MYLA, GIIL…QSQV, and FLFL…ALRI. Asparagine 329 is a glycosylation site (N-linked (GlcNAc...) asparagine). Helical transmembrane passes span 371-391, 428-448, 477-497, 512-532, 538-558, and 583-603; these read IFLA…VTGP, IIAL…DLFA, LAFL…LASP, LVGL…SVVW, GTNW…WGVI, and FGFW…AWLV.

This sequence belongs to the major facilitator superfamily.

The protein resides in the vacuole membrane. In terms of biological role, probable transporter. The sequence is that of Probable transporter mch1 (mch1) from Emericella nidulans (strain FGSC A4 / ATCC 38163 / CBS 112.46 / NRRL 194 / M139) (Aspergillus nidulans).